Reading from the N-terminus, the 428-residue chain is Isocitrate dehydrogenase [NADP], mitochondrial (428 aa).

A mitochondrion-targeting transit peptide spans Met-1–Ala-16. Residues Thr-91–Thr-93 and Arg-98 contribute to the NADP(+) site. Thr-93 contacts substrate. Substrate-binding positions include Ser-110 to Arg-116, Arg-125, and Arg-148. Residue Asp-269 coordinates Mn(2+). Residue Lys-277 coordinates NADP(+). Asp-292 provides a ligand contact to Mn(2+). NADP(+)-binding positions include Gly-327–His-332 and Asn-345.

The protein belongs to the isocitrate and isopropylmalate dehydrogenases family. As to quaternary structure, homodimer. Requires Mg(2+) as cofactor. The cofactor is Mn(2+).

The protein resides in the mitochondrion. The catalysed reaction is D-threo-isocitrate + NADP(+) = 2-oxoglutarate + CO2 + NADPH. Its activity is regulated as follows. The enzyme is subject to end product inhibition by NADPH and 2-oxoglutarate. Its function is as follows. Mitochondrial IDP1 may regulate flux through the tricarboxylic acid cycle and respiration. Its probably critical function is the production of NADPH. The polypeptide is Isocitrate dehydrogenase [NADP], mitochondrial (IDP1) (Saccharomyces cerevisiae (strain ATCC 204508 / S288c) (Baker's yeast)).